The chain runs to 440 residues: Tubby-like F-box protein 13 (440 aa).

An F-box domain is found at 51–106 (SCWASLPPELLRDIIERLEESEATWPSRKHVVACAGVCRTWREMCKEIVKNPELCG).

Belongs to the TUB family. As to expression, ubiquitous.

The sequence is that of Tubby-like F-box protein 13 (TULP13) from Oryza sativa subsp. japonica (Rice).